The primary structure comprises 372 residues: UDP-N-acetylglucosamine--N-acetylmuramyl-(pentapeptide) pyrophosphoryl-undecaprenol N-acetylglucosamine transferase (372 aa).

UDP-N-acetyl-alpha-D-glucosamine-binding positions include Thr-11–Gly-13, Asn-123, Arg-160, Ser-200, and Gln-298.

It belongs to the glycosyltransferase 28 family. MurG subfamily.

It is found in the cell membrane. It catalyses the reaction di-trans,octa-cis-undecaprenyl diphospho-N-acetyl-alpha-D-muramoyl-L-alanyl-D-glutamyl-meso-2,6-diaminopimeloyl-D-alanyl-D-alanine + UDP-N-acetyl-alpha-D-glucosamine = di-trans,octa-cis-undecaprenyl diphospho-[N-acetyl-alpha-D-glucosaminyl-(1-&gt;4)]-N-acetyl-alpha-D-muramoyl-L-alanyl-D-glutamyl-meso-2,6-diaminopimeloyl-D-alanyl-D-alanine + UDP + H(+). It participates in cell wall biogenesis; peptidoglycan biosynthesis. Functionally, cell wall formation. Catalyzes the transfer of a GlcNAc subunit on undecaprenyl-pyrophosphoryl-MurNAc-pentapeptide (lipid intermediate I) to form undecaprenyl-pyrophosphoryl-MurNAc-(pentapeptide)GlcNAc (lipid intermediate II). In Cutibacterium acnes (strain DSM 16379 / KPA171202) (Propionibacterium acnes), this protein is UDP-N-acetylglucosamine--N-acetylmuramyl-(pentapeptide) pyrophosphoryl-undecaprenol N-acetylglucosamine transferase.